Reading from the N-terminus, the 2924-residue chain is Probable polyketide synthase 6 (2924 aa).

In terms of domain architecture, Ketosynthase family 3 (KS3) spans 11–442 (EKGVAIVGIG…GSNCCLLISE (432 aa)). Catalysis depends on for beta-ketoacyl synthase activity residues Cys-181, His-323, and His-362. The interval 635-668 (GVNPSFILGHSLGEISASYCSGMIDLDTFCYTVY) is acyl/malonyl transferase. Ser-645 functions as the For acyl/malonyl transferase activity in the catalytic mechanism. The segment at 925–1047 (IDHLGLSNSY…SNFQLLDHGN (123 aa)) is N-terminal hotdog fold. The region spanning 925–1210 (IDHLGLSNSY…CKSLIPIKDS (286 aa)) is the PKS/mFAS DH domain. His-959 (proton acceptor; for dehydratase activity) is an active-site residue. Residues 1064-1210 (NLSKLTKNEL…CKSLIPIKDS (147 aa)) are C-terminal hotdog fold. The Proton donor; for dehydratase activity role is filled by Asp-1122. In terms of domain architecture, Carrier spans 2431 to 2508 (TGNKNIDELF…ISIKMILNSL (78 aa)). Residue Ser-2468 is modified to O-(pantetheine 4'-phosphoryl)serine. The chain crosses the membrane as a helical span at residues 2551–2571 (KIILLTGTTGFLGGFLLFNML).

The cofactor is pantetheine 4'-phosphate.

The protein localises to the membrane. Probable polyketide synthase. The sequence is that of Probable polyketide synthase 6 (pks6) from Dictyostelium discoideum (Social amoeba).